Consider the following 216-residue polypeptide: SYKVSGGLHGVGVSVVNALSKKLHLTIHRAGQIHEQEYAHGDPQYPLKVVGETDTSGTTVRFWPSELTFSQTIFSVDILARRLRELSFLNAGVRIVLRDERVNLEHIYDYEVGLSEKSALDIAGLPGKLADCQEKDPALSELYLVEGDSAGGSAKQGRNRKMQAILPLKGKILNVERARFDKMISSQEVGTLITALGCGIGREEYNPDKLRYHKII.

The Toprim domain occupies 140–216 (SELYLVEGDS…PDKLRYHKII (77 aa)).

The protein belongs to the type II topoisomerase GyrB family. In terms of assembly, heterotetramer, composed of two GyrA and two GyrB chains. In the heterotetramer, GyrA contains the active site tyrosine that forms a transient covalent intermediate with DNA, while GyrB binds cofactors and catalyzes ATP hydrolysis.

It localises to the cytoplasm. It catalyses the reaction ATP-dependent breakage, passage and rejoining of double-stranded DNA.. Its function is as follows. A type II topoisomerase that negatively supercoils closed circular double-stranded (ds) DNA in an ATP-dependent manner to modulate DNA topology and maintain chromosomes in an underwound state. Negative supercoiling favors strand separation, and DNA replication, transcription, recombination and repair, all of which involve strand separation. Also able to catalyze the interconversion of other topological isomers of dsDNA rings, including catenanes and knotted rings. Type II topoisomerases break and join 2 DNA strands simultaneously in an ATP-dependent manner. This is DNA gyrase subunit B (gyrB) from Acinetobacter venetianus (strain ATCC 31012 / DSM 23050 / BCRC 14357 / CCUG 45561 / CIP 110063 / KCTC 2702 / LMG 19082 / RAG-1).